The primary structure comprises 828 residues: Putative alpha-1,3-mannosyltransferase MNN12 (828 aa).

Residues 1–13 (MIEKLTIKRSRQK) are Cytoplasmic-facing. Residues 14–34 (VIAYSVIIIWLMIVNIWLLNN) traverse the membrane as a helical segment. Over 35–828 (YHLNSSTLTR…YYGDVWVGME (794 aa)) the chain is Lumenal. An N-linked (GlcNAc...) asparagine glycan is attached at N38. The tract at residues 80-104 (HQEEDVPNSQSTDNSLIKPTSPAKN) is disordered. The segment covering 86–103 (PNSQSTDNSLIKPTSPAK) has biased composition (polar residues). Residues N247, N437, and N591 are each glycosylated (N-linked (GlcNAc...) asparagine).

Belongs to the MNN1/MNT family.

Its subcellular location is the golgi apparatus membrane. The protein operates within protein modification; protein glycosylation. Responsible for addition of the terminal mannose residues to the outer chain of core N-linked polysaccharides and to O-linked mannotriose. Implicated in late Golgi modifications. This chain is Putative alpha-1,3-mannosyltransferase MNN12 (MNN12), found in Candida albicans (strain SC5314 / ATCC MYA-2876) (Yeast).